Consider the following 173-residue polypeptide: MAARMDPGIGGDVTLLHTSQLDNLINLARASSLYYLTFGLACCGIELMQTGGPRADVMRFGAIPRASPRQADFMIVAGTLTYKMAERARLLYDQMPEPKYVISMGSCSNCGGLFQLGYSVCKGVDKVIPVDVYVPGCPPRPEALTEGLLRLQEIVRSEPWSTKRRPAAQAEGA.

[4Fe-4S] cluster contacts are provided by C42, C43, C107, and C137.

This sequence belongs to the complex I 20 kDa subunit family. In terms of assembly, NDH-1 is composed of 14 different subunits. Subunits NuoB, C, D, E, F, and G constitute the peripheral sector of the complex. The cofactor is [4Fe-4S] cluster.

It is found in the cell inner membrane. The catalysed reaction is a quinone + NADH + 5 H(+)(in) = a quinol + NAD(+) + 4 H(+)(out). Functionally, NDH-1 shuttles electrons from NADH, via FMN and iron-sulfur (Fe-S) centers, to quinones in the respiratory chain. The immediate electron acceptor for the enzyme in this species is believed to be ubiquinone. Couples the redox reaction to proton translocation (for every two electrons transferred, four hydrogen ions are translocated across the cytoplasmic membrane), and thus conserves the redox energy in a proton gradient. This is NADH-quinone oxidoreductase subunit B 1 from Anaeromyxobacter sp. (strain K).